The primary structure comprises 111 residues: Movement protein TGB2 (111 aa).

The Cytoplasmic portion of the chain corresponds to 1–16 (MSSHQNFLTPPPDHSK). A helical membrane pass occupies residues 17–37 (AILAVAVGVGLAIVLHFSLSY). At 38-72 (KLPSPGDNIHSLPFGGTYRDGTKSIIYNSPHRGPG) the chain is on the lumenal side. A helical transmembrane segment spans residues 73-93 (QSGALPIITVFAIIECTLHVL). The Cytoplasmic segment spans residues 94 to 111 (RKRDNPVRPQHSDCPNCS).

This sequence belongs to the Tymovirales TGBp2 protein family.

It is found in the host endoplasmic reticulum membrane. In terms of biological role, plays a role in viral cell-to-cell propagation, by facilitating genome transport to neighboring plant cells through plasmosdesmata,. This chain is Movement protein TGB2, found in Carica papaya (Papaya).